We begin with the raw amino-acid sequence, 211 residues long: Large ribosomal subunit protein uL3 (211 aa).

Belongs to the universal ribosomal protein uL3 family. Part of the 50S ribosomal subunit. Forms a cluster with proteins L14 and L19.

In terms of biological role, one of the primary rRNA binding proteins, it binds directly near the 3'-end of the 23S rRNA, where it nucleates assembly of the 50S subunit. The chain is Large ribosomal subunit protein uL3 from Citrifermentans bemidjiense (strain ATCC BAA-1014 / DSM 16622 / JCM 12645 / Bem) (Geobacter bemidjiensis).